The following is a 126-amino-acid chain: MSIPADLKYTESHEWVRTEADGTLTVGITDHAQEALGDIVFFEVQQLGQTVSAGDTVAVIESVKAASDIYAPVSGEIIEANPNVADTPDAVNSAPYDNWLFKIKPADGASQDRLMDAAAYGKSIGE.

In terms of domain architecture, Lipoyl-binding spans 23–104 (TLTVGITDHA…PYDNWLFKIK (82 aa)). Lysine 64 bears the N6-lipoyllysine mark.

The protein belongs to the GcvH family. In terms of assembly, the glycine cleavage system is composed of four proteins: P, T, L and H. It depends on (R)-lipoate as a cofactor.

In terms of biological role, the glycine cleavage system catalyzes the degradation of glycine. The H protein shuttles the methylamine group of glycine from the P protein to the T protein. This Paraburkholderia phymatum (strain DSM 17167 / CIP 108236 / LMG 21445 / STM815) (Burkholderia phymatum) protein is Glycine cleavage system H protein.